We begin with the raw amino-acid sequence, 162 residues long: ATP synthase subunit b 1 (162 aa).

The chain crosses the membrane as a helical span at residues 3 to 23; the sequence is FLDATFFAFVGLVLFLALVVY.

The protein belongs to the ATPase B chain family. F-type ATPases have 2 components, F(1) - the catalytic core - and F(0) - the membrane proton channel. F(1) has five subunits: alpha(3), beta(3), gamma(1), delta(1), epsilon(1). F(0) has three main subunits: a(1), b(2) and c(10-14). The alpha and beta chains form an alternating ring which encloses part of the gamma chain. F(1) is attached to F(0) by a central stalk formed by the gamma and epsilon chains, while a peripheral stalk is formed by the delta and b chains.

Its subcellular location is the cell inner membrane. In terms of biological role, f(1)F(0) ATP synthase produces ATP from ADP in the presence of a proton or sodium gradient. F-type ATPases consist of two structural domains, F(1) containing the extramembraneous catalytic core and F(0) containing the membrane proton channel, linked together by a central stalk and a peripheral stalk. During catalysis, ATP synthesis in the catalytic domain of F(1) is coupled via a rotary mechanism of the central stalk subunits to proton translocation. Component of the F(0) channel, it forms part of the peripheral stalk, linking F(1) to F(0). This is ATP synthase subunit b 1 from Rhizobium johnstonii (strain DSM 114642 / LMG 32736 / 3841) (Rhizobium leguminosarum bv. viciae).